Reading from the N-terminus, the 95-residue chain is Integration host factor subunit beta (95 aa).

It belongs to the bacterial histone-like protein family. Heterodimer of an alpha and a beta chain.

Functionally, this protein is one of the two subunits of integration host factor, a specific DNA-binding protein that functions in genetic recombination as well as in transcriptional and translational control. This is Integration host factor subunit beta from Shewanella halifaxensis (strain HAW-EB4).